Here is a 201-residue protein sequence, read N- to C-terminus: Holliday junction branch migration complex subunit RuvA (201 aa).

The tract at residues 1-64 (MYEYIRGQFQ…EDFIGLYGFT (64 aa)) is domain I. The interval 65-143 (TKEELEMFKL…PDELTSEEEQ (79 aa)) is domain II. Residues 144–152 (LIEGINDNS) form a flexible linker region. Positions 153-201 (DYSFNINETLSALMALGYTEKEAQKALEKVDKTLSIENMIKESLKLLMR) are domain III.

Belongs to the RuvA family. As to quaternary structure, homotetramer. Forms an RuvA(8)-RuvB(12)-Holliday junction (HJ) complex. HJ DNA is sandwiched between 2 RuvA tetramers; dsDNA enters through RuvA and exits via RuvB. An RuvB hexamer assembles on each DNA strand where it exits the tetramer. Each RuvB hexamer is contacted by two RuvA subunits (via domain III) on 2 adjacent RuvB subunits; this complex drives branch migration. In the full resolvosome a probable DNA-RuvA(4)-RuvB(12)-RuvC(2) complex forms which resolves the HJ.

It localises to the cytoplasm. In terms of biological role, the RuvA-RuvB-RuvC complex processes Holliday junction (HJ) DNA during genetic recombination and DNA repair, while the RuvA-RuvB complex plays an important role in the rescue of blocked DNA replication forks via replication fork reversal (RFR). RuvA specifically binds to HJ cruciform DNA, conferring on it an open structure. The RuvB hexamer acts as an ATP-dependent pump, pulling dsDNA into and through the RuvAB complex. HJ branch migration allows RuvC to scan DNA until it finds its consensus sequence, where it cleaves and resolves the cruciform DNA. The chain is Holliday junction branch migration complex subunit RuvA from Clostridium perfringens (strain SM101 / Type A).